The primary structure comprises 188 residues: Methionine aminopeptidase (188 aa).

Histidine 60 is a binding site for substrate. A divalent metal cation-binding residues include aspartate 80, aspartate 91, and histidine 164. Histidine 172 is a substrate binding site.

It belongs to the peptidase M24A family. Methionine aminopeptidase archaeal type 2 subfamily. In terms of assembly, monomer. Co(2+) serves as cofactor. Zn(2+) is required as a cofactor. Requires Mn(2+) as cofactor. It depends on Fe(2+) as a cofactor.

It catalyses the reaction Release of N-terminal amino acids, preferentially methionine, from peptides and arylamides.. Its function is as follows. Removes the N-terminal methionine from nascent proteins. The N-terminal methionine is often cleaved when the second residue in the primary sequence is small and uncharged (Met-Ala-, Cys, Gly, Pro, Ser, Thr, or Val). The protein is Methionine aminopeptidase (map) of Methanothermus fervidus.